The sequence spans 238 residues: Ribosomal RNA large subunit methyltransferase E (238 aa).

S-adenosyl-L-methionine contacts are provided by G85, W87, D113, D129, and D153. Residue K193 is the Proton acceptor of the active site.

The protein belongs to the class I-like SAM-binding methyltransferase superfamily. RNA methyltransferase RlmE family.

The protein resides in the cytoplasm. It catalyses the reaction uridine(2552) in 23S rRNA + S-adenosyl-L-methionine = 2'-O-methyluridine(2552) in 23S rRNA + S-adenosyl-L-homocysteine + H(+). Its function is as follows. Specifically methylates the uridine in position 2552 of 23S rRNA at the 2'-O position of the ribose in the fully assembled 50S ribosomal subunit. This Ruegeria sp. (strain TM1040) (Silicibacter sp.) protein is Ribosomal RNA large subunit methyltransferase E.